Consider the following 111-residue polypeptide: Antirepressor protein CarS (111 aa).

In terms of assembly, monomer. Interacts with CarA and CarH.

In terms of biological role, involved in carotenoid biosynthesis. Antagonizes the transcriptional repressor proteins CarA and CarH by preventing their binding to DNA. Can also dissociate preformed CarA-DNA complexes. Does not bind DNA. This is Antirepressor protein CarS (carS) from Myxococcus xanthus.